The following is a 430-amino-acid chain: Glutamate-1-semialdehyde 2,1-aminomutase 2 (430 aa).

Lys269 bears the N6-(pyridoxal phosphate)lysine mark.

It belongs to the class-III pyridoxal-phosphate-dependent aminotransferase family. HemL subfamily. In terms of assembly, homodimer. Pyridoxal 5'-phosphate serves as cofactor.

The protein resides in the cytoplasm. It catalyses the reaction (S)-4-amino-5-oxopentanoate = 5-aminolevulinate. It participates in porphyrin-containing compound metabolism; protoporphyrin-IX biosynthesis; 5-aminolevulinate from L-glutamyl-tRNA(Glu): step 2/2. This Lysinibacillus sphaericus (strain C3-41) protein is Glutamate-1-semialdehyde 2,1-aminomutase 2.